The chain runs to 346 residues: Arsenite methyltransferase (346 aa).

The protein belongs to the methyltransferase superfamily. Arsenite methyltransferase family.

It catalyses the reaction arsenic triglutathione + [thioredoxin]-dithiol + S-adenosyl-L-methionine + 2 H2O = methylarsonous acid + [thioredoxin]-disulfide + 3 glutathione + S-adenosyl-L-homocysteine + H(+). The catalysed reaction is arsenic triglutathione + 2 [thioredoxin]-dithiol + 2 S-adenosyl-L-methionine + H2O = dimethylarsinous acid + 2 [thioredoxin]-disulfide + 3 glutathione + 2 S-adenosyl-L-homocysteine + 2 H(+). It carries out the reaction arsenic triglutathione + 3 [thioredoxin]-dithiol + 3 S-adenosyl-L-methionine = trimethylarsine + 3 [thioredoxin]-disulfide + 3 glutathione + 3 S-adenosyl-L-homocysteine + 3 H(+). Functionally, catalyzes the transfer of a methyl group from AdoMet to arsenite, producing methylated arsenicals. Involved in the conversion of As(III) to dimethylarsenate as the main product in the medium and also produces dimethylarsine and trimethylarsine gases. Reduces the arsenic toxicity in the cell and may contribute to the global arsenic cycling. This Aquipseudomonas alcaligenes (strain ATCC 14909 / DSM 50342 / CCUG 1425 / JCM 20561 / NBRC 14159 / NCIMB 9945 / NCTC 10367 / 1577) (Pseudomonas alcaligenes) protein is Arsenite methyltransferase.